Here is a 276-residue protein sequence, read N- to C-terminus: MSSKRNSLMLPLRIAIAGASGRMGRMLIEATLKEEGAVLASAFDRPGTTFIGRDAGELSGSATGILITDDPRAAIAAADCVIDFTRPEGTLAHLALARELGKAMVIGTTGFSTAEKEAIAAAAQAIPIVFAPNMAVGVNAVFKLLEVAARILDDGYDVEVIEAHHRFKVDAPSGTALRMGEVVACELGRDLETCAIYGREGVTGERKAETIGFSTIRGGDVVGDHTVLFAGIGERIEITHRSGSRMPYASGSLRAARFLAGRSSGLFDMQDVLGLR.

NAD(+)-binding positions include glycine 18–methionine 23 and aspartate 44. Arginine 45 is an NADP(+) binding site. NAD(+) is bound by residues glycine 107–threonine 109 and alanine 131–methionine 134. The active-site Proton donor/acceptor is histidine 164. Histidine 165 lines the (S)-2,3,4,5-tetrahydrodipicolinate pocket. The active-site Proton donor is the lysine 168. Glycine 174–threonine 175 lines the (S)-2,3,4,5-tetrahydrodipicolinate pocket.

The protein belongs to the DapB family.

It is found in the cytoplasm. The catalysed reaction is (S)-2,3,4,5-tetrahydrodipicolinate + NAD(+) + H2O = (2S,4S)-4-hydroxy-2,3,4,5-tetrahydrodipicolinate + NADH + H(+). It catalyses the reaction (S)-2,3,4,5-tetrahydrodipicolinate + NADP(+) + H2O = (2S,4S)-4-hydroxy-2,3,4,5-tetrahydrodipicolinate + NADPH + H(+). It functions in the pathway amino-acid biosynthesis; L-lysine biosynthesis via DAP pathway; (S)-tetrahydrodipicolinate from L-aspartate: step 4/4. Functionally, catalyzes the conversion of 4-hydroxy-tetrahydrodipicolinate (HTPA) to tetrahydrodipicolinate. The protein is 4-hydroxy-tetrahydrodipicolinate reductase of Aromatoleum aromaticum (strain DSM 19018 / LMG 30748 / EbN1) (Azoarcus sp. (strain EbN1)).